Here is a 298-residue protein sequence, read N- to C-terminus: Acetylglutamate kinase (298 aa).

Substrate-binding positions include 64-65 (GG), R86, and N195.

Belongs to the acetylglutamate kinase family. ArgB subfamily.

Its subcellular location is the cytoplasm. The enzyme catalyses N-acetyl-L-glutamate + ATP = N-acetyl-L-glutamyl 5-phosphate + ADP. It participates in amino-acid biosynthesis; L-arginine biosynthesis; N(2)-acetyl-L-ornithine from L-glutamate: step 2/4. Functionally, catalyzes the ATP-dependent phosphorylation of N-acetyl-L-glutamate. This chain is Acetylglutamate kinase, found in Aquifex aeolicus (strain VF5).